We begin with the raw amino-acid sequence, 153 residues long: Large ribosomal subunit protein bL27m (153 aa).

A mitochondrion-targeting transit peptide spans 1-37 (MINQGLFIRVNNFQLLKASLAYKKASNILTFPPIRTS). A disordered region spans residues 34–57 (IRTSTKHGGGSSKNTGDSAGRRLG).

It belongs to the bacterial ribosomal protein bL27 family. In terms of assembly, component of the mitochondrial large ribosomal subunit (mt-LSU). Mature yeast 74S mitochondrial ribosomes consist of a small (37S) and a large (54S) subunit. The 37S small subunit contains a 15S ribosomal RNA (15S mt-rRNA) and at least 32 different proteins. The 54S large subunit contains a 21S rRNA (21S mt-rRNA) and at least 45 different proteins.

It localises to the mitochondrion. Its function is as follows. Component of the mitochondrial ribosome (mitoribosome), a dedicated translation machinery responsible for the synthesis of mitochondrial genome-encoded proteins, including at least some of the essential transmembrane subunits of the mitochondrial respiratory chain. The mitoribosomes are attached to the mitochondrial inner membrane and translation products are cotranslationally integrated into the membrane. The protein is Large ribosomal subunit protein bL27m (mrp7) of Schizosaccharomyces pombe (strain 972 / ATCC 24843) (Fission yeast).